The chain runs to 1774 residues: 6-methylsalicylic acid synthase (1774 aa).

Over residues 1–14 (MHSAATSTYPSGKT) the composition is skewed to polar residues. The disordered stretch occupies residues 1–21 (MHSAATSTYPSGKTSPAPVGT). Residues 32 to 457 (SNDVAVVGMA…GTVSHAVIEE (426 aa)) form the Ketosynthase family 3 (KS3) domain. The segment at 186–238 (RISYHLNLMGPSTAVDAACASSLVAIHHGVQAIRLGESKVAIVGGVNALCGPG) is acyltransferase. Active-site for beta-ketoacyl synthase activity residues include cysteine 204, histidine 339, and histidine 379. The acetyl/malonyl transferases stretch occupies residues 642–676 (NGITPQAVIGHSVGEIAASVVAGALSPAEGALIVT). The active-site For malonyltransferase activity is serine 653. Residues 926–1045 (HTLLGQRIPV…AYWDRKVAGS (120 aa)) form an N-terminal hotdog fold region. Residues 926–1202 (HTLLGQRIPV…FSEIEGTPGV (277 aa)) enclose the PKS/mFAS DH domain. The Proton acceptor; for dehydratase activity role is filled by histidine 958. The C-terminal hotdog fold stretch occupies residues 1059–1202 (VTKLADNFSI…FSEIEGTPGV (144 aa)). The active-site Proton donor; for dehydratase activity is aspartate 1123. The 2-oxoacyl reductase stretch occupies residues 1403–1450 (GPRLLPRPEGTYLITGGLGVLGLEVADFLVEKGARRLLLISRRALPPR). 1419–1424 (GLGVLG) contacts NADP(+). A Carrier domain is found at 1698–1772 (AYLDEKIRGC…HLAVWFAEKL (75 aa)). Serine 1732 carries the O-(pantetheine 4'-phosphoryl)serine modification.

Homomultimer.

The catalysed reaction is 3 malonyl-CoA + acetyl-CoA + NADPH + 3 H(+) = 6-methylsalicylate + 3 CO2 + NADP(+) + 4 CoA + H2O. The protein operates within mycotoxin biosynthesis; patulin biosynthesis. In terms of biological role, this multifunctional enzyme is a polyketide synthase. It catalyzes a total of 11 steps by seven different component enzymes, in the biosynthesis of the antibiotic patulin. The chain is 6-methylsalicylic acid synthase from Penicillium patulum (Penicillium griseofulvum).